A 906-amino-acid chain; its full sequence is Protein translocase subunit SecA (906 aa).

ATP-binding positions include Q87, 105 to 109, and D512; that span reads GEGKT. The tract at residues 879–906 is disordered; the sequence is REGEKIGRNDPCPCGSGQKYKQCHGKLS. The Zn(2+) site is built by C890, C892, C901, and H902.

It belongs to the SecA family. As to quaternary structure, monomer and homodimer. Part of the essential Sec protein translocation apparatus which comprises SecA, SecYEG and auxiliary proteins SecDF-YajC and YidC. Zn(2+) is required as a cofactor.

The protein resides in the cell inner membrane. Its subcellular location is the cytoplasm. It catalyses the reaction ATP + H2O + cellular proteinSide 1 = ADP + phosphate + cellular proteinSide 2.. Its function is as follows. Part of the Sec protein translocase complex. Interacts with the SecYEG preprotein conducting channel. Has a central role in coupling the hydrolysis of ATP to the transfer of proteins into and across the cell membrane, serving both as a receptor for the preprotein-SecB complex and as an ATP-driven molecular motor driving the stepwise translocation of polypeptide chains across the membrane. This Shewanella frigidimarina (strain NCIMB 400) protein is Protein translocase subunit SecA.